We begin with the raw amino-acid sequence, 322 residues long: 4-hydroxythreonine-4-phosphate dehydrogenase (322 aa).

A substrate-binding site is contributed by threonine 132. A divalent metal cation-binding residues include histidine 160, histidine 205, and histidine 260. Substrate-binding residues include lysine 268, asparagine 277, and arginine 286.

The protein belongs to the PdxA family. As to quaternary structure, homodimer. Zn(2+) is required as a cofactor. Mg(2+) serves as cofactor. The cofactor is Co(2+).

Its subcellular location is the cytoplasm. The catalysed reaction is 4-(phosphooxy)-L-threonine + NAD(+) = 3-amino-2-oxopropyl phosphate + CO2 + NADH. The protein operates within cofactor biosynthesis; pyridoxine 5'-phosphate biosynthesis; pyridoxine 5'-phosphate from D-erythrose 4-phosphate: step 4/5. Its function is as follows. Catalyzes the NAD(P)-dependent oxidation of 4-(phosphooxy)-L-threonine (HTP) into 2-amino-3-oxo-4-(phosphooxy)butyric acid which spontaneously decarboxylates to form 3-amino-2-oxopropyl phosphate (AHAP). The sequence is that of 4-hydroxythreonine-4-phosphate dehydrogenase from Xanthomonas campestris pv. campestris (strain 8004).